The sequence spans 765 residues: MAASVVKTPKCPRRGSVKDVAQNAPRTAPTSSKEANWNWWLLLATVFLVTFATRFYKVTEPDHICWDETHFGKMGSWYINRTFFFDVHPPLGKMLIGLSGYLTGYNGTFPFEKPGDKYNETRYQGMRYFCTTLGALIMPMGFDTVYDLTRSHEAALLAAAYLIFDVGLLTLNQYILLDPILLFFMMASVWGMVKVSKSTASGGSYGLRWWLWLFLTGTMLSCTISVKFVGLFVVLLVGLHTATELWLILGDLGQPILETVKQLACRAITLIVWPVLLYILFFYIHLSVLNRSGNGDGFYSSAFQSRLIGNSLYNASMPRDVAYGSLVTIKNHKTGGGYLHSHHHLYPKGSGARQQQVTTYTHKDENNKWLIRPHNKPGPPKGKVQILRHGDLVRLTHMATRRNLHSHNEPAPMTKKHLQVTGYGELGLGDANDVWRVLIVGGKVNETVHTVTSRLKFIHLLQNCALTSSGKQLPKWGFEQQEVSCNPNVRDKNSQWNVEDNEHKLMPSVSFSVYAPGFFARFLESHAVMLQGNAGLKPKEGEVTSRPWQWPINYRGQFFSGSSYRIYLLGNPLIWWSNLVFLALFVTVFLCNAVVQQRRAGFARSAAQNQAQVPDSETVAQDEESEHSTTDICSCCTPAKEIVPKAVPSGSPEAPNPAQSLRAAAWLFLGWMLHYLPFWAMGRVLYFHHYFPALIFNSLLTGVMYNYILRVLPKWIHHVILGLVLSILVYSFAAFSPLAYGMSGPLANEPNSTMYNLKWLSTWEF.

A disordered region spans residues 1-31 (MAASVVKTPKCPRRGSVKDVAQNAPRTAPTS). The helical transmembrane segment at 35–55 (ANWNWWLLLATVFLVTFATRF) threads the bilayer. N-linked (GlcNAc...) asparagine glycosylation is found at Asn80, Asn106, and Asn119. Helical transmembrane passes span 128–148 (YFCT…VYDL), 175–195 (ILLD…MVKV), 206–226 (GLRW…TISV), 228–248 (FVGL…LWLI), and 268–288 (ITLI…HLSV). Residues Asn290 and Asn314 are each glycosylated (N-linked (GlcNAc...) asparagine). 3 MIR domains span residues 318–374 (PRDV…IRPH), 384–440 (VQIL…VLIV), and 445–501 (NETV…VEDN). N-linked (GlcNAc...) asparagine glycosylation occurs at Asn445. Helical transmembrane passes span 566–586 (IYLL…ALFV), 667–687 (LFLG…VLYF), 689–709 (HYFP…NYIL), and 719–739 (VILG…SPLA). Residue Asn751 is glycosylated (N-linked (GlcNAc...) asparagine).

Belongs to the glycosyltransferase 39 family. Interacts with Rt/POMT1. At the cellular blastoderm stage, expression accumulates in the ventrally located mesoderm primordium. At germ band extension, mesoderm expression is seen as stripes of strong expression. A very strong signal is also detected in the invaginating gut. As the germ band retracts, mesodermal expression decays and becomes restricted to somatic muscle precursors.

The protein localises to the endoplasmic reticulum membrane. It catalyses the reaction a di-trans,poly-cis-dolichyl beta-D-mannosyl phosphate + L-seryl-[protein] = 3-O-(alpha-D-mannosyl)-L-seryl-[protein] + a di-trans,poly-cis-dolichyl phosphate + H(+). It carries out the reaction a di-trans,poly-cis-dolichyl beta-D-mannosyl phosphate + L-threonyl-[protein] = 3-O-(alpha-D-mannosyl)-L-threonyl-[protein] + a di-trans,poly-cis-dolichyl phosphate + H(+). It functions in the pathway protein modification; protein glycosylation. Functionally, rt/POMT1 and tw/POMT2 function as a protein O-mannosyltransferase in association with each other to generate and maintain normal muscle development. This Drosophila melanogaster (Fruit fly) protein is Protein O-mannosyl-transferase 2 (tw).